A 366-amino-acid polypeptide reads, in one-letter code: Cobalt-precorrin-5B C(1)-methyltransferase (366 aa).

The protein belongs to the CbiD family.

The enzyme catalyses Co-precorrin-5B + S-adenosyl-L-methionine = Co-precorrin-6A + S-adenosyl-L-homocysteine. It participates in cofactor biosynthesis; adenosylcobalamin biosynthesis; cob(II)yrinate a,c-diamide from sirohydrochlorin (anaerobic route): step 6/10. In terms of biological role, catalyzes the methylation of C-1 in cobalt-precorrin-5B to form cobalt-precorrin-6A. This chain is Cobalt-precorrin-5B C(1)-methyltransferase, found in Pseudomonas paraeruginosa (strain DSM 24068 / PA7) (Pseudomonas aeruginosa (strain PA7)).